A 493-amino-acid polypeptide reads, in one-letter code: GTPase Der (493 aa).

Positions 3 to 166 (PVIALVGRPN…EALGIFPKDN (164 aa)) constitute an EngA-type G 1 domain. GTP-binding positions include 9-16 (GRPNVGKS), 56-60 (DTGGI), and 118-121 (NKVD). Positions 167–184 (VEEEGEGEPASEEVAEGE) are enriched in acidic residues. The disordered stretch occupies residues 167–195 (VEEEGEGEPASEEVAEGEEPTRIPGPSEK). The EngA-type G 2 domain occupies 198 to 371 (IKIAIIGRPN…SVQESFRSAV (174 aa)). GTP-binding positions include 204 to 211 (GRPNVGKS), 251 to 255 (DTAGV), and 316 to 319 (NKWD). The region spanning 372–456 (TRWPTSRLTS…PIRIEYKGGE (85 aa)) is the KH-like domain. The span at 454–463 (GGENPYEGKK) shows a compositional bias: basic and acidic residues. The segment at 454–493 (GGENPYEGKKNSLTARQVNKKRRLMSHHKKAEKKKKDKRR) is disordered. Positions 471 to 493 (VNKKRRLMSHHKKAEKKKKDKRR) are enriched in basic residues.

This sequence belongs to the TRAFAC class TrmE-Era-EngA-EngB-Septin-like GTPase superfamily. EngA (Der) GTPase family. Associates with the 50S ribosomal subunit.

In terms of biological role, GTPase that plays an essential role in the late steps of ribosome biogenesis. This Pseudomonas aeruginosa (strain LESB58) protein is GTPase Der.